The primary structure comprises 135 residues: Peptidyl-prolyl cis-trans isomerase FPR2 (135 aa).

The N-terminal stretch at 1–17 (MMFNIYLFVTFFSTILA) is a signal peptide. The PPIase FKBP-type domain maps to 43–132 (GDKVKVHYTG…VFDVELVDVK (90 aa)).

This sequence belongs to the FKBP-type PPIase family. FKBP2 subfamily.

The protein resides in the endoplasmic reticulum membrane. It catalyses the reaction [protein]-peptidylproline (omega=180) = [protein]-peptidylproline (omega=0). Its activity is regulated as follows. Inhibited by both FK506 and rapamycin. Binds FK506 with 15-fold lower affinity than FKB1. In terms of biological role, PPIases accelerate the folding of proteins. It catalyzes the cis-trans isomerization of proline imidic peptide bonds in oligopeptides. FKBP-13 may play a role in protein trafficking in the ER. In Saccharomyces cerevisiae (strain ATCC 204508 / S288c) (Baker's yeast), this protein is Peptidyl-prolyl cis-trans isomerase FPR2 (FPR2).